Here is an 876-residue protein sequence, read N- to C-terminus: Eukaryotic translation initiation factor 3 subunit C (876 aa).

2 disordered regions span residues 1–25 and 154–233; these read MSRFFATGTDSESESSSEDEPVVRA and SXFR…IREQ. A compositionally biased stretch (acidic residues) spans 11 to 20; sequence SESESSSEDE. 2 stretches are compositionally biased toward basic and acidic residues: residues 154–172 and 182–192; these read SXFREDPDLPDDNERKDSS and KPIKEKPKPEP. Low complexity predominate over residues 206–219; the sequence is SMDWASSSSDSSFS. The PCI domain occupies 632 to 808; sequence FHMHINLELL…ECAILHRSEP (177 aa). The segment at 839-876 is disordered; it reads FFQRGGAQRGEGRQRERPREGWNRRTRNRRRDDERADD. The segment covering 848–861 has biased composition (basic and acidic residues); sequence GEGRQRERPREGWN.

It belongs to the eIF-3 subunit C family. In terms of assembly, component of the eukaryotic translation initiation factor 3 (eIF-3) complex.

Its subcellular location is the cytoplasm. Component of the eukaryotic translation initiation factor 3 (eIF-3) complex, which is involved in protein synthesis of a specialized repertoire of mRNAs and, together with other initiation factors, stimulates binding of mRNA and methionyl-tRNAi to the 40S ribosome. The eIF-3 complex specifically targets and initiates translation of a subset of mRNAs involved in cell proliferation. This is Eukaryotic translation initiation factor 3 subunit C from Bombyx mori (Silk moth).